We begin with the raw amino-acid sequence, 297 residues long: Phosphatidylglycerol--prolipoprotein diacylglyceryl transferase (297 aa).

Helical transmembrane passes span 20–40, 50–70, 105–125, and 133–153; these read FLTI…GLFV, INPL…IIGA, AVWE…LSII, and IHLK…QSIG. A 1,2-diacyl-sn-glycero-3-phospho-(1'-sn-glycerol) is bound at residue Arg154. The next 3 helical transmembrane spans lie at 193 to 213, 225 to 245, and 266 to 286; these read PTFL…IFVF, GFIS…IEGL, and AQFI…FLRL.

Belongs to the Lgt family.

It localises to the cell inner membrane. The enzyme catalyses L-cysteinyl-[prolipoprotein] + a 1,2-diacyl-sn-glycero-3-phospho-(1'-sn-glycerol) = an S-1,2-diacyl-sn-glyceryl-L-cysteinyl-[prolipoprotein] + sn-glycerol 1-phosphate + H(+). Its pathway is protein modification; lipoprotein biosynthesis (diacylglyceryl transfer). Catalyzes the transfer of the diacylglyceryl group from phosphatidylglycerol to the sulfhydryl group of the N-terminal cysteine of a prolipoprotein, the first step in the formation of mature lipoproteins. The protein is Phosphatidylglycerol--prolipoprotein diacylglyceryl transferase of Prochlorococcus marinus (strain MIT 9312).